The chain runs to 160 residues: Transcriptional repressor NrdR (160 aa).

Polar residues predominate over residues 1–11 (MRCPNCNSLDT). The disordered stretch occupies residues 1–20 (MRCPNCNSLDTQVKDSRPTE). The segment at 3 to 34 (CPNCNSLDTQVKDSRPTEDSSVIRRRRVCIAC) is a zinc-finger region. The region spanning 49-139 (LTVIKRNGRR…VYRNFREAKD (91 aa)) is the ATP-cone domain.

The protein belongs to the NrdR family. The cofactor is Zn(2+).

Negatively regulates transcription of bacterial ribonucleotide reductase nrd genes and operons by binding to NrdR-boxes. The sequence is that of Transcriptional repressor NrdR from Rhodopseudomonas palustris (strain BisB5).